Here is a 122-residue protein sequence, read N- to C-terminus: Small ribosomal subunit protein uS13 (122 aa).

Residues 99–122 (RGQRTHTNARTRKGPAKAIAGKKK) are disordered.

This sequence belongs to the universal ribosomal protein uS13 family. As to quaternary structure, part of the 30S ribosomal subunit. Forms a loose heterodimer with protein S19. Forms two bridges to the 50S subunit in the 70S ribosome.

Its function is as follows. Located at the top of the head of the 30S subunit, it contacts several helices of the 16S rRNA. In the 70S ribosome it contacts the 23S rRNA (bridge B1a) and protein L5 of the 50S subunit (bridge B1b), connecting the 2 subunits; these bridges are implicated in subunit movement. Contacts the tRNAs in the A and P-sites. This Cereibacter sphaeroides (strain ATCC 17029 / ATH 2.4.9) (Rhodobacter sphaeroides) protein is Small ribosomal subunit protein uS13.